The chain runs to 525 residues: GMP synthase [glutamine-hydrolyzing] (525 aa).

A Glutamine amidotransferase type-1 domain is found at 9–207; sequence RILILDFGSQ…VLDICGCEAL (199 aa). The active-site Nucleophile is the cysteine 86. Active-site residues include histidine 181 and glutamate 183. Positions 208–400 constitute a GMPS ATP-PPase domain; it reads WTPSKIAEDA…LGLPYDMVYR (193 aa). 235 to 241 provides a ligand contact to ATP; that stretch reads SGGVDSS.

As to quaternary structure, homodimer.

It carries out the reaction XMP + L-glutamine + ATP + H2O = GMP + L-glutamate + AMP + diphosphate + 2 H(+). Its pathway is purine metabolism; GMP biosynthesis; GMP from XMP (L-Gln route): step 1/1. Its function is as follows. Catalyzes the synthesis of GMP from XMP. This Pseudomonas fluorescens (strain Pf0-1) protein is GMP synthase [glutamine-hydrolyzing].